The chain runs to 302 residues: Oligopeptide transport system permease protein OppC (302 aa).

Residues 1-39 lie on the Cytoplasmic side of the membrane; that stretch reads MMLSKKNSETLENFSEKLEVEGRSLWQDARRRFMHNRAA. A helical membrane pass occupies residues 40–62; sequence VASLIVLFLIALFVTVAPMLSQF. Topologically, residues 63 to 102 are periplasmic; it reads TYFDTDWGMMSSAPDMASGHYFGTDSSGRDLLVRVAIGGR. The 190-residue stretch at 101-290 folds into the ABC transmembrane type-1 domain; it reads GRISLMVGIA…VTLFCFNFIG (190 aa). The helical transmembrane segment at 103-125 threads the bilayer; sequence ISLMVGIAAALVAVIVGTLYGSL. Over 126 to 137 the chain is Cytoplasmic; sequence SGYLGGKIDSVM. The helical transmembrane segment at 138–160 threads the bilayer; sequence MRLLEILNSFPFMFFVILLVTFF. Topologically, residues 161-163 are periplasmic; sequence GQN. Residues 164–183 traverse the membrane as a helical segment; it reads ILLIFVAIGMVSWLDMARIV. Residues 184–213 are Cytoplasmic-facing; it reads RGQTLSLKRKEFIEAAQVGGVSTASIVIRH. Residues 214–236 traverse the membrane as a helical segment; the sequence is IVPNVLGVVVVYASLLVPSMILF. The Periplasmic portion of the chain corresponds to 237-267; the sequence is ESFLSFLGLGTQEPLSSWGALLSDGANSMEV. A helical transmembrane segment spans residues 268–290; it reads SPWLLLFPAGFLVVTLFCFNFIG. Topologically, residues 291–302 are cytoplasmic; it reads DGLRDALDPKDR.

Belongs to the binding-protein-dependent transport system permease family. OppBC subfamily. The complex is composed of two ATP-binding proteins (OppD and OppF), two transmembrane proteins (OppB and OppC) and a solute-binding protein (OppA).

It is found in the cell inner membrane. Part of the ABC transporter complex OppABCDF involved in the uptake of oligopeptides, including the cell wall murein tripeptide L-alanyl-gamma-D-glutamyl-meso-diaminopimelate. Responsible for the translocation of the substrate across the membrane. Plays an important nutritional role and is involved in the recycling of cell wall peptides. The chain is Oligopeptide transport system permease protein OppC from Salmonella typhimurium (strain LT2 / SGSC1412 / ATCC 700720).